Reading from the N-terminus, the 385-residue chain is Photoreceptor ankyrin repeat protein (385 aa).

ANK repeat units follow at residues 17–46 (CNLK…SPEE), 53–83 (NGRT…DVNQ), 87–116 (DGNT…GLDL), 122–151 (RGLT…DLSS), and 156–190 (RGKT…QLSL). The disordered stretch occupies residues 270–385 (LGTRGKSVPE…GGLGQAGGSK (116 aa)). Over residues 284–297 (APPPPPEPHPPQQV) the composition is skewed to pro residues. The span at 304–326 (APNQSPQSMFSQWLQSRDSTRSQ) shows a compositional bias: polar residues. Residues 361 to 373 (FQERKKKEEETEP) are compositionally biased toward basic and acidic residues. Residues 374–385 (RGGGLGQAGGSK) show a composition bias toward gly residues.

As to expression, isoform 1: Expressed predominantly in the retina. Isoform 2: Expressed in the pineal gland.

It localises to the cytoplasm. Its subcellular location is the cytosol. The protein resides in the nucleus. Functionally, acts as a transcriptional repressor for CRX-activated photoreceptor gene regulation. The sequence is that of Photoreceptor ankyrin repeat protein from Mus musculus (Mouse).